The sequence spans 237 residues: Ribonuclease PH (237 aa).

Phosphate-binding positions include R86 and 124-126; that span reads GTR.

This sequence belongs to the RNase PH family. As to quaternary structure, homohexameric ring arranged as a trimer of dimers.

It catalyses the reaction tRNA(n+1) + phosphate = tRNA(n) + a ribonucleoside 5'-diphosphate. Functionally, phosphorolytic 3'-5' exoribonuclease that plays an important role in tRNA 3'-end maturation. Removes nucleotide residues following the 3'-CCA terminus of tRNAs; can also add nucleotides to the ends of RNA molecules by using nucleoside diphosphates as substrates, but this may not be physiologically important. Probably plays a role in initiation of 16S rRNA degradation (leading to ribosome degradation) during starvation. The sequence is that of Ribonuclease PH from Methylorubrum extorquens (strain CM4 / NCIMB 13688) (Methylobacterium extorquens).